We begin with the raw amino-acid sequence, 142 residues long: Histone H2B (142 aa).

The span at 1–10 (MPPKPAEKKP) shows a compositional bias: basic and acidic residues. The interval 1-50 (MPPKPAEKKPSSTAGKAPASSAGKAPAEAAKKTSKAPAKSGEKKKATKVR) is disordered. 2 positions are modified to N6-acetyllysine; alternate: K8 and K9. Glycyl lysine isopeptide (Lys-Gly) (interchain with G-Cter in SUMO); alternate cross-links involve residues K8 and K9. Low complexity predominate over residues 11–28 (SSTAGKAPASSAGKAPAE). K24 is subject to N6-acetyllysine. Positions 40–50 (SGEKKKATKVR) are enriched in basic and acidic residues. A Glycyl lysine isopeptide (Lys-Gly) (interchain with G-Cter in ubiquitin) cross-link involves residue K137.

Belongs to the histone H2B family. The nucleosome is a histone octamer containing two molecules each of H2A, H2B, H3 and H4 assembled in one H3-H4 heterotetramer and two H2A-H2B heterodimers. The octamer wraps approximately 147 bp of DNA. Monoubiquitinated by the UBC2-BRE1 complex to form H2BK123ub1. H2BK123ub1 gives a specific tag for epigenetic transcriptional activation and is also prerequisite for H3K4me and H3K79me formation. H2BK123ub1 also modulates the formation of double-strand breaks during meiosis and is a prerequisite for DNA-damage checkpoint activation. Post-translationally, acetylation of N-terminal lysines and particularly formation of H2BK11ac has a positive effect on transcription. In terms of processing, sumoylation to form H2BK6su or H2BK7su occurs preferentially near the telomeres and represses gene transcription.

The protein resides in the nucleus. It localises to the chromosome. Core component of nucleosome. Nucleosomes wrap and compact DNA into chromatin, limiting DNA accessibility to the cellular machineries which require DNA as a template. Histones thereby play a central role in transcription regulation, DNA repair, DNA replication and chromosomal stability. DNA accessibility is regulated via a complex set of post-translational modifications of histones, also called histone code, and nucleosome remodeling. The sequence is that of Histone H2B (HTB1) from Mycosarcoma maydis (Corn smut fungus).